Reading from the N-terminus, the 441-residue chain is Serine carboxypeptidase-like 1 (441 aa).

Residues 1–29 form the signal peptide; sequence MANKYVSSVLKSLLVLLHLVFLSKQHVDS. Disulfide bonds link cysteine 88–cysteine 331, cysteine 252–cysteine 266, and cysteine 290–cysteine 297. A glycan (N-linked (GlcNAc...) asparagine) is linked at asparagine 109. Serine 184 is an active-site residue. N-linked (GlcNAc...) asparagine glycosylation is present at asparagine 350. Aspartate 366 is a catalytic residue. Asparagine 382 carries an N-linked (GlcNAc...) asparagine glycan. Histidine 419 is a catalytic residue.

The protein belongs to the peptidase S10 family. Expressed in seedlings and roots.

It localises to the secreted. In terms of biological role, probable carboxypeptidase. In Arabidopsis thaliana (Mouse-ear cress), this protein is Serine carboxypeptidase-like 1 (SCPL1).